Reading from the N-terminus, the 401-residue chain is L-methionine gamma-lyase (401 aa).

Pyridoxal 5'-phosphate-binding positions include 59–61 (YTR) and 89–90 (GI). A substrate-binding site is contributed by Tyr114. Residue 210–212 (SAT) coordinates pyridoxal 5'-phosphate. Position 213 is an N6-(pyridoxal phosphate)lysine (Lys213). Residue Arg377 participates in substrate binding.

Belongs to the trans-sulfuration enzymes family. L-methionine gamma-lyase subfamily. Homotetramer; dimer of active dimers. The cofactor is pyridoxal 5'-phosphate.

The catalysed reaction is L-methionine + H2O = methanethiol + 2-oxobutanoate + NH4(+). The enzyme catalyses L-homocysteine + H2O = 2-oxobutanoate + hydrogen sulfide + NH4(+) + H(+). Catalyzes the alpha,gamma-elimination of L-methionine to produce methanethiol, 2-oxobutanoate and ammonia; methanethiol (methyl mercaptan) is considered to be one of the main causes of the oral malodor associated with periodontitis and may also play a role in the pathogenicity of T.denticola. Also displays homocysteine desulfhydrase activity, degrading homocysteine to produce hydrogen sulfide, 2-oxobutanoate and ammonia. The chain is L-methionine gamma-lyase from Treponema denticola (strain ATCC 35405 / DSM 14222 / CIP 103919 / JCM 8153 / KCTC 15104).